Here is a 280-residue protein sequence, read N- to C-terminus: Type II restriction enzyme MboI (280 aa).

This sequence belongs to the DpnII type II restriction endonuclease family.

The enzyme catalyses Endonucleolytic cleavage of DNA to give specific double-stranded fragments with terminal 5'-phosphates.. Functionally, a P subtype restriction enzyme that recognizes the double-stranded unmethylated sequence 5'-GATC-3' and cleaves before G-1. The polypeptide is Type II restriction enzyme MboI (mboIR) (Moraxella bovis).